The sequence spans 397 residues: tRNA-specific 2-thiouridylase MnmA (397 aa).

Residues 6–13 (AMSGGVDS) and leucine 32 each bind ATP. The active-site Nucleophile is the cysteine 101. Cysteines 101 and 199 form a disulfide. Glycine 125 serves as a coordination point for ATP. The interaction with tRNA stretch occupies residues 148-150 (KDQ). Residue cysteine 199 is the Cysteine persulfide intermediate of the active site.

Belongs to the MnmA/TRMU family.

It localises to the cytoplasm. The catalysed reaction is S-sulfanyl-L-cysteinyl-[protein] + uridine(34) in tRNA + AH2 + ATP = 2-thiouridine(34) in tRNA + L-cysteinyl-[protein] + A + AMP + diphosphate + H(+). Its function is as follows. Catalyzes the 2-thiolation of uridine at the wobble position (U34) of tRNA, leading to the formation of s(2)U34. The polypeptide is tRNA-specific 2-thiouridylase MnmA (Clavibacter sepedonicus (Clavibacter michiganensis subsp. sepedonicus)).